Here is a 1058-residue protein sequence, read N- to C-terminus: SMC5-SMC6 complex localization factor protein 1 (1058 aa).

2 BRCT domains span residues 12–77 (MTGF…IHSA) and 119–196 (GAPG…GDFL). An NSE5-like domain; mediates interaction with SLF2 region spans residues 410–1058 (PRGVLNLIES…MMCRSVMEFS (649 aa)). ANK repeat units follow at residues 806–836 (KGETALHRACINNQVEKLILLLSLPGIDINV), 840–869 (AGWTPLHEACNYGNTVCVQEILQRCPEVDL), and 874–903 (DGVTPLHDALSNGHVEIGKLLLQHGGPVLL). A Glycyl lysine isopeptide (Lys-Gly) (interchain with G-Cter in SUMO2) cross-link involves residue K931.

Interacts (via N-terminus) with SLF2; this interaction links RAD18 to the SMC5-SMC6 complex. Interacts (via BRCT domains) with RAD18; this interaction occurs in a SLF2-independent manner. Interacts with SMC6. Interacts (via BRCT domains) with RAD18 (via C-terminus and phosphorylated form); this interaction is required for efficient repair of UV-induced DNA damage.

The protein resides in the nucleus. It is found in the cytoplasm. It localises to the cytoskeleton. The protein localises to the microtubule organizing center. Its subcellular location is the centrosome. In terms of biological role, plays a role in the DNA damage response (DDR) pathway by regulating postreplication repair of UV-damaged DNA and genomic stability maintenance. The SLF1-SLF2 complex acts to link RAD18 with the SMC5-SMC6 complex at replication-coupled interstrand cross-links (ICL) and DNA double-strand breaks (DSBs) sites on chromatin during DNA repair in response to stalled replication forks. Promotes the recruitment of SLF2 and the SMC5-SMC6 complex to DNA lesions. The polypeptide is SMC5-SMC6 complex localization factor protein 1 (Homo sapiens (Human)).